We begin with the raw amino-acid sequence, 275 residues long: 4-diphosphocytidyl-2-C-methyl-D-erythritol kinase (275 aa).

Lysine 14 is an active-site residue. 98-108 (PMGAGLGGGSS) provides a ligand contact to ATP. Aspartate 140 is an active-site residue.

It belongs to the GHMP kinase family. IspE subfamily.

The enzyme catalyses 4-CDP-2-C-methyl-D-erythritol + ATP = 4-CDP-2-C-methyl-D-erythritol 2-phosphate + ADP + H(+). Its pathway is isoprenoid biosynthesis; isopentenyl diphosphate biosynthesis via DXP pathway; isopentenyl diphosphate from 1-deoxy-D-xylulose 5-phosphate: step 3/6. In terms of biological role, catalyzes the phosphorylation of the position 2 hydroxy group of 4-diphosphocytidyl-2C-methyl-D-erythritol. The chain is 4-diphosphocytidyl-2-C-methyl-D-erythritol kinase from Francisella philomiragia subsp. philomiragia (strain ATCC 25017 / CCUG 19701 / FSC 153 / O#319-036).